The sequence spans 122 residues: Large ribosomal subunit protein bL12 (122 aa).

Belongs to the bacterial ribosomal protein bL12 family. As to quaternary structure, homodimer. Part of the ribosomal stalk of the 50S ribosomal subunit. Forms a multimeric L10(L12)X complex, where L10 forms an elongated spine to which 2 to 4 L12 dimers bind in a sequential fashion. Binds GTP-bound translation factors.

Functionally, forms part of the ribosomal stalk which helps the ribosome interact with GTP-bound translation factors. Is thus essential for accurate translation. The protein is Large ribosomal subunit protein bL12 of Sulfurimonas denitrificans (strain ATCC 33889 / DSM 1251) (Thiomicrospira denitrificans (strain ATCC 33889 / DSM 1251)).